A 243-amino-acid polypeptide reads, in one-letter code: Triosephosphate isomerase (243 aa).

9–11 (NWK) contributes to the substrate binding site. Residue His96 is the Electrophile of the active site. Glu165 serves as the catalytic Proton acceptor. Substrate is bound by residues Gly171, Ser204, and 225–226 (GG).

It belongs to the triosephosphate isomerase family. As to quaternary structure, homodimer.

The protein localises to the cytoplasm. The catalysed reaction is D-glyceraldehyde 3-phosphate = dihydroxyacetone phosphate. It functions in the pathway carbohydrate biosynthesis; gluconeogenesis. It participates in carbohydrate degradation; glycolysis; D-glyceraldehyde 3-phosphate from glycerone phosphate: step 1/1. Its function is as follows. Involved in the gluconeogenesis. Catalyzes stereospecifically the conversion of dihydroxyacetone phosphate (DHAP) to D-glyceraldehyde-3-phosphate (G3P). This is Triosephosphate isomerase from Prochlorococcus marinus (strain MIT 9313).